The sequence spans 418 residues: UDP-N-acetylglucosamine 1-carboxyvinyltransferase (418 aa).

Position 23-24 (23-24) interacts with phosphoenolpyruvate; that stretch reads KN. Residue Arg-92 coordinates UDP-N-acetyl-alpha-D-glucosamine. The Proton donor role is filled by Cys-116. Cys-116 carries the 2-(S-cysteinyl)pyruvic acid O-phosphothioketal modification. UDP-N-acetyl-alpha-D-glucosamine contacts are provided by residues 121–125, 161–164, Asp-306, and Ile-328; these read RPVDL and KVSV.

This sequence belongs to the EPSP synthase family. MurA subfamily.

It is found in the cytoplasm. The enzyme catalyses phosphoenolpyruvate + UDP-N-acetyl-alpha-D-glucosamine = UDP-N-acetyl-3-O-(1-carboxyvinyl)-alpha-D-glucosamine + phosphate. It functions in the pathway cell wall biogenesis; peptidoglycan biosynthesis. In terms of biological role, cell wall formation. Adds enolpyruvyl to UDP-N-acetylglucosamine. The sequence is that of UDP-N-acetylglucosamine 1-carboxyvinyltransferase from Vibrio parahaemolyticus serotype O3:K6 (strain RIMD 2210633).